A 314-amino-acid chain; its full sequence is Ferrochelatase (314 aa).

Fe cation is bound by residues H184 and E259.

Belongs to the ferrochelatase family.

The protein localises to the cytoplasm. The enzyme catalyses heme b + 2 H(+) = protoporphyrin IX + Fe(2+). It participates in porphyrin-containing compound metabolism; protoheme biosynthesis; protoheme from protoporphyrin-IX: step 1/1. Its function is as follows. Catalyzes the ferrous insertion into protoporphyrin IX. The sequence is that of Ferrochelatase from Chlamydia trachomatis serovar A (strain ATCC VR-571B / DSM 19440 / HAR-13).